The primary structure comprises 147 residues: MQLHELKPAPGSRQKPTRKGQGIGSGLGKTAGRGHKGQKARSGGGVRPGFEGGQQPLQRRLPKRGFTNARFKKEFAIINVGDLDVFEAGTVVTPELLLERKMIKKLKDGVKLLADGNIEKALTVKLHGVSEAAAEKIKAAGGQVEVM.

The disordered stretch occupies residues 1–65 (MQLHELKPAP…PLQRRLPKRG (65 aa)). Gly residues-rich tracts occupy residues 21-31 (QGIGSGLGKTA) and 42-52 (SGGGVRPGFEG).

Belongs to the universal ribosomal protein uL15 family. In terms of assembly, part of the 50S ribosomal subunit.

Functionally, binds to the 23S rRNA. In Heliobacterium modesticaldum (strain ATCC 51547 / Ice1), this protein is Large ribosomal subunit protein uL15.